A 96-amino-acid polypeptide reads, in one-letter code: RNA-binding protein Hfq (96 aa).

Positions 9-68 (DPYLNALRRERIPVSIYLVNGIKLQGQIESFDQFVILLKNTVNQMVYKHAISTVVPARSV) constitute a Sm domain. Residues 67-96 (SVSHHNNSNNSNQQNYQQEQQTDSNVEKAE) are disordered. A compositionally biased stretch (low complexity) spans 72-87 (NNSNNSNQQNYQQEQQ).

It belongs to the Hfq family. In terms of assembly, homohexamer.

In terms of biological role, RNA chaperone that binds small regulatory RNA (sRNAs) and mRNAs to facilitate mRNA translational regulation in response to envelope stress, environmental stress and changes in metabolite concentrations. Also binds with high specificity to tRNAs. The polypeptide is RNA-binding protein Hfq (Pasteurella multocida (strain Pm70)).